The following is a 99-amino-acid chain: Acylphosphatase (99 aa).

The Acylphosphatase-like domain maps to 11 to 97 (ARRIHVKGKV…VVAQGFTQKP (87 aa)). Catalysis depends on residues Arg-26 and Asn-44.

Belongs to the acylphosphatase family.

The enzyme catalyses an acyl phosphate + H2O = a carboxylate + phosphate + H(+). This Rhizorhabdus wittichii (strain DSM 6014 / CCUG 31198 / JCM 15750 / NBRC 105917 / EY 4224 / RW1) (Sphingomonas wittichii) protein is Acylphosphatase (acyP).